The following is a 240-amino-acid chain: 6-carboxyhexanoate--CoA ligase (240 aa).

Belongs to the BioW family. As to quaternary structure, homodimer. The cofactor is Mg(2+).

It carries out the reaction heptanedioate + ATP + CoA = 6-carboxyhexanoyl-CoA + AMP + diphosphate. The protein operates within metabolic intermediate metabolism; pimeloyl-CoA biosynthesis; pimeloyl-CoA from pimelate: step 1/1. Functionally, catalyzes the transformation of pimelate into pimeloyl-CoA with concomitant hydrolysis of ATP to AMP. In Aquifex aeolicus (strain VF5), this protein is 6-carboxyhexanoate--CoA ligase.